The following is a 788-amino-acid chain: Ribonucleoside-diphosphate reductase subunit alpha (788 aa).

Residues 2–92 (ITVVKRNGRI…LYDLYHKVSG (91 aa)) form the ATP-cone domain. Residues K6, 12–18 (EPLDITK), and T52 contribute to the ATP site. T200 contributes to the GDP binding site. Residues C216 and C497 are joined by a disulfide bond. DTTP contacts are provided by residues 223–225 (DNI) and R253. N424 is a GDP binding site. N424 serves as the catalytic Proton acceptor. C426 acts as the Cysteine radical intermediate in catalysis. Residues E428 and 661–663 (SSI) contribute to the GDP site. E428 serves as the catalytic Proton acceptor.

The protein belongs to the ribonucleoside diphosphate reductase large chain family. As to quaternary structure, tetramer of two alpha and two beta subunits.

The enzyme catalyses a 2'-deoxyribonucleoside 5'-diphosphate + [thioredoxin]-disulfide + H2O = a ribonucleoside 5'-diphosphate + [thioredoxin]-dithiol. With respect to regulation, under complex allosteric control mediated by deoxynucleoside triphosphates and ATP binding to separate specificity and activation sites on the alpha subunit. The type of nucleotide bound at the specificity site determines substrate preference. It seems probable that ATP makes the enzyme reduce CDP and UDP, dGTP favors ADP reduction and dTTP favors GDP reduction. Stimulated by ATP and inhibited by dATP binding to the activity site. Provides the precursors necessary for DNA synthesis. Catalyzes the biosynthesis of deoxyribonucleotides from the corresponding ribonucleotides. The sequence is that of Ribonucleoside-diphosphate reductase subunit alpha (nrdA) from Helicobacter pylori (strain ATCC 700392 / 26695) (Campylobacter pylori).